The following is a 287-amino-acid chain: Pyridoxal kinase PdxY (287 aa).

Residues Ser-10 and 45-46 (TQ) each bind substrate. Residues Asp-112, Ala-144, Glu-149, Lys-182, and 209 to 212 (RPLV) contribute to the ATP site. Residue Asp-224 coordinates substrate.

The protein belongs to the pyridoxine kinase family. PdxY subfamily. As to quaternary structure, homodimer. Mg(2+) serves as cofactor.

It carries out the reaction pyridoxal + ATP = pyridoxal 5'-phosphate + ADP + H(+). It participates in cofactor metabolism; pyridoxal 5'-phosphate salvage; pyridoxal 5'-phosphate from pyridoxal: step 1/1. In terms of biological role, pyridoxal kinase involved in the salvage pathway of pyridoxal 5'-phosphate (PLP). Catalyzes the phosphorylation of pyridoxal to PLP. This Shigella sonnei (strain Ss046) protein is Pyridoxal kinase PdxY.